The sequence spans 795 residues: Glutamine--tRNA ligase, cytoplasmic (795 aa).

The disordered stretch occupies residues 188 to 220 (ADNEKPTKKKEKKEKPAKVEEKKAVVETTAEPS). Basic and acidic residues predominate over residues 200-212 (KEKPAKVEEKKAV). The 'HIGH' region signature appears at 277-287 (PEPNGYLHIGH). Residues 278-280 (EPN) and 284-290 (HIGHAKA) contribute to the ATP site. L-glutamine is bound by residues Asp-310 and Tyr-450. Residues Thr-469, 498 to 499 (RL), and 506 to 508 (MSK) each bind ATP. The short motif at 505 to 509 (VMSKR) is the 'KMSKS' region element.

It belongs to the class-I aminoacyl-tRNA synthetase family.

It is found in the cytoplasm. It localises to the cytosol. It catalyses the reaction tRNA(Gln) + L-glutamine + ATP = L-glutaminyl-tRNA(Gln) + AMP + diphosphate. The polypeptide is Glutamine--tRNA ligase, cytoplasmic (Arabidopsis thaliana (Mouse-ear cress)).